The sequence spans 262 residues: MPAELSPIDTAKFAAARRAVDLVQDGMKLGLGTGSTAAWMVRCLAERVREEGLRVQGVPTSTRTAELARALGIQVVTLDEAKWLDLTIDGADEFDADFNLIKGGGAALLQEKIVATASDRMVVIADAAKEVAHLGAFPLPVEVIPFGWQSTKMLIEETLEGMDVLGREVTLRLSGDAPLLTDEKNYILDLHLKRIGEPRPLALALNQIAGVVENGLFIDICDTVVVGHGDGRVSLRDLQSGQAEEGSIDMDRARNIFADLGD.

Residues 33–36 (TGST), 89–92 (DGAD), and 102–105 (KGGG) each bind substrate. Glu-111 functions as the Proton acceptor in the catalytic mechanism. Substrate is bound at residue Lys-129.

It belongs to the ribose 5-phosphate isomerase family. Homodimer.

The catalysed reaction is aldehydo-D-ribose 5-phosphate = D-ribulose 5-phosphate. It functions in the pathway carbohydrate degradation; pentose phosphate pathway; D-ribose 5-phosphate from D-ribulose 5-phosphate (non-oxidative stage): step 1/1. Its function is as follows. Catalyzes the reversible conversion of ribose-5-phosphate to ribulose 5-phosphate. The protein is Ribose-5-phosphate isomerase A of Cereibacter sphaeroides (strain ATCC 17023 / DSM 158 / JCM 6121 / CCUG 31486 / LMG 2827 / NBRC 12203 / NCIMB 8253 / ATH 2.4.1.) (Rhodobacter sphaeroides).